A 151-amino-acid polypeptide reads, in one-letter code: Large ribosomal subunit protein uL15 (151 aa).

The tract at residues 1 to 57 (MTLRLDSLKSNKGARRRKLRKGRGIAAGQGASCGFGMRGQKSRSGRPTRPGFEGGQM) is disordered. Residues 12 to 23 (KGARRRKLRKGR) show a composition bias toward basic residues. Gly residues predominate over residues 25-37 (IAAGQGASCGFGM).

The protein belongs to the universal ribosomal protein uL15 family. As to quaternary structure, part of the 50S ribosomal subunit.

Functionally, binds to the 23S rRNA. This chain is Large ribosomal subunit protein uL15, found in Synechococcus sp. (strain CC9605).